The primary structure comprises 511 residues: DELLA protein RGL1 (511 aa).

The span at 1-11 shows a compositional bias: basic and acidic residues; the sequence is MKREHNHRESS. A disordered region spans residues 1–20; sequence MKREHNHRESSAGEGGSSSM. The DELLA motif signature appears at 32 to 36; it reads DELLV. The LEXLE motif signature appears at 54–58; that stretch reads LEQLE. The short motif at 73–77 is the VHYNP motif element; it reads VHYNP. Residues 143–506 enclose the GRAS domain; it reads LDSQETGVRL…RPLIATSAWR (364 aa). The leucine repeat I (LRI) stretch occupies residues 150-204; it reads VRLVHALLACAEAVQQNNLKLADALVKHVGLLASSQAGAMRKVATYFAEGLARRI. The LxCxE motif motif lies at 157–161; that stretch reads LACAE. Positions 223–288 are VHIID; the sequence is QIHFYESCPY…NGPPDFRLTG (66 aa). The VHIID motif lies at 254–258; it reads VHVID. The interval 298–330 is leucine repeat II (LRII); it reads EVGWKLGQLASTIGVNFEFKSIALNNLSDLKPE. The segment at 341–427 is PFYRE; it reads VAVNSVFELH…ELFLGRQILN (87 aa). The LXXLL motif motif lies at 349-353; that stretch reads LHRLL. Residues 430–506 are SAW; that stretch reads ACEGEDRVER…RPLIATSAWR (77 aa).

This sequence belongs to the GRAS family. DELLA subfamily. Interacts directly with the GID2/SLY1 component of the SCF(GID2) complex. Interacts (via N-terminus) with GID1A, GID1B and GID1B (via N-terminus). Interacts with the BOI proteins BOI, BRG1, BRG2 and BRG3. Binds to and coactivates GAF1/IDD2 and ENY/IDD1. Post-translationally, phosphorylated. May be ubiquitinated, as suggested by its interaction with GID2. Ubiquitination is however unsure since in contrast to other DELLA proteins, it is not ubiquitinated and degraded upon GA application. Nevertheless, ubiquitination may be triggered by other processes. In terms of tissue distribution, predominantly expressed in germinating seeds and flowers and siliques. Highly expressed in inflorescences and weakly or not expressed in rosette leaves, etiolated seedlings, siliques, mature stems and roots. RGA and GAI transcripts were detected at slightly varying levels in all tissues examined. RGL2 signal was undetected, and RGL3 signal was very weak in all tissues examined (rosette leaves, seedlings, inflorescences, and siliques) except inflorescences. In the flower, it is expressed in developing ovules as well as in developing anthers throughout microspore development.

It is found in the nucleus. Its function is as follows. Probable transcriptional regulator that acts as a repressor of the gibberellin (GA) signaling pathway. No effect of the BOI proteins on its stability. Probably acts by participating in large multiprotein complexes that repress transcription of GA-inducible genes. Has overlapping but distinct roles in GA signaling compared to RGA and GAI. Regulates the floral development. May also participate in seed germination and in ovule and anther development. Its activity is probably regulated by other phytohormones such as auxin and ethylene. The protein is DELLA protein RGL1 (RGL1) of Arabidopsis thaliana (Mouse-ear cress).